The primary structure comprises 762 residues: Palmitoyltransferase ZDHHC8 (762 aa).

Residues 1 to 13 (MPRSPGTRLKPAK) are Cytoplasmic-facing. A helical membrane pass occupies residues 14–34 (YIPVATAAALLVGSSTLFFVF). The Lumenal segment spans residues 35-52 (TCPWLTRAVSPAIPVYNG). Residues 53–73 (ILFLFVLANFSMATFMDPGVF) traverse the membrane as a helical segment. Topologically, residues 74–148 (PRADEDEDKE…NCIGRRNYRY (75 aa)) are cytoplasmic. A DHHC domain is found at 104-154 (KWCATCHFYRPPRCSHCSVCDNCVEDFDHHCPWVNNCIGRRNYRYFFLFLL). The active-site S-palmitoyl cysteine intermediate is Cys-134. Residues 149–169 (FFLFLLSLSAHMVGVVAFGLL) form a helical membrane-spanning segment. Over 170–190 (YVLNHSEGLGAAHTTITMAVM) the chain is Lumenal. The chain crosses the membrane as a helical span at residues 191-211 (CVAGLFFIPVIGLTGFHVVLV). Residues 212–762 (TRGRTTNEQV…VGGTTYEISV (551 aa)) are Cytoplasmic-facing. Disordered regions lie at residues 289–350 (GLKA…PPTP), 362–423 (GPKT…TTDA), 436–537 (ASRR…SPVR), and 551–574 (ERKDREERERLLRSQTDSLFGDSG). Ser-335 is subject to Phosphoserine. The segment covering 408–417 (LRPPYPPSPP) has biased composition (pro residues). Arg-439 carries the post-translational modification Omega-N-methylarginine. Residues 471 to 485 (RNGSLSYDSLLNPGS) are compositionally biased toward polar residues. Pro residues predominate over residues 511-521 (PSDPPRPPPRS). The span at 551 to 562 (ERKDREERERLL) shows a compositional bias: basic and acidic residues. Ser-603 and Ser-624 each carry phosphoserine. Positions 626–644 (SSLSSSMSRAPRTSSSSLQ) are enriched in low complexity. Disordered regions lie at residues 626 to 684 (SSLS…SYTG) and 707 to 744 (DHPQLKTPPSKLNGQSPGMARLGPAASPMGPNASPARH). Phosphoserine is present on residues Ser-672, Ser-679, Ser-722, and Ser-740.

It belongs to the DHHC palmitoyltransferase family. ERF2/ZDHHC9 subfamily. As to expression, expressed in brain cortex and hippocampus.

The protein localises to the golgi apparatus membrane. It is found in the mitochondrion membrane. It carries out the reaction L-cysteinyl-[protein] + hexadecanoyl-CoA = S-hexadecanoyl-L-cysteinyl-[protein] + CoA. Palmitoyltransferase that catalyzes the addition of palmitate onto various protein substrates and therefore functions in several unrelated biological processes. Through the palmitoylation of ABCA1 regulates the localization of the transporter to the plasma membrane and thereby regulates its function in cholesterol and phospholipid efflux. Could also pamitoylate the D(2) dopamine receptor DRD2 and regulate its stability and localization to the plasma membrane. Could also play a role in glutamatergic transmission. This Mus musculus (Mouse) protein is Palmitoyltransferase ZDHHC8.